The chain runs to 290 residues: Nucleoid occlusion protein (290 aa).

A DNA-binding region (H-T-H motif) is located at residues 153-172; the sequence is EALAQRLGKGQSTIANKLRL.

This sequence belongs to the ParB family.

It localises to the cytoplasm. It is found in the nucleoid. Effects nucleoid occlusion by binding relatively nonspecifically to DNA and preventing the assembly of the division machinery in the vicinity of the nucleoid, especially under conditions that disturb the cell cycle. It helps to coordinate cell division and chromosome segregation by preventing the formation of the Z ring through the nucleoid, which would cause chromosome breakage. The chain is Nucleoid occlusion protein from Bacillus cereus (strain G9842).